Reading from the N-terminus, the 78-residue chain is Translation initiation factor IF-1 (78 aa).

Positions 2-78 (SKNNLNETES…TRARITYRFK (77 aa)) constitute an S1-like domain.

The protein belongs to the IF-1 family. As to quaternary structure, component of the 30S ribosomal translation pre-initiation complex which assembles on the 30S ribosome in the order IF-2 and IF-3, IF-1 and N-formylmethionyl-tRNA(fMet); mRNA recruitment can occur at any time during PIC assembly.

The protein resides in the cytoplasm. Functionally, one of the essential components for the initiation of protein synthesis. Stabilizes the binding of IF-2 and IF-3 on the 30S subunit to which N-formylmethionyl-tRNA(fMet) subsequently binds. Helps modulate mRNA selection, yielding the 30S pre-initiation complex (PIC). Upon addition of the 50S ribosomal subunit IF-1, IF-2 and IF-3 are released leaving the mature 70S translation initiation complex. This is Translation initiation factor IF-1 from Onion yellows phytoplasma (strain OY-M).